A 1051-amino-acid polypeptide reads, in one-letter code: Anucleate primary sterigmata protein B (1051 aa).

2 coiled-coil regions span residues 10–200 (IDRL…YAIA) and 239–285 (STLV…ELKL). Basic and acidic residues predominate over residues 58–90 (KDNQGLKRKIRDLEKQLKDQQSDKESMLNHDPE). Disordered regions lie at residues 58–100 (KDNQ…DRDH) and 141–160 (LKSL…REER). The span at 294–303 (AGDSILDRSA) shows a compositional bias: basic and acidic residues. 4 disordered regions span residues 294-329 (AGDS…AERE), 877-902 (NHPR…LAER), 909-928 (NTAA…QMTN), and 984-1051 (EERD…DIEV). Residues 309-321 (RPSSSISDRTGQS) are compositionally biased toward polar residues. 2 coiled-coil regions span residues 325-743 (DAER…RNSM) and 787-878 (RNLL…LQNH). Polar residues-rich tracts occupy residues 877 to 897 (NHPR…SSTI) and 916 to 928 (ARSS…QMTN). Positions 950–1004 (NQEVWIKRLHELERRLKAEREARLLDRNGARRRLEERDAENKRLRAQLDRQRLRQ) form a coiled coil. Basic and acidic residues-rich tracts occupy residues 984 to 1001 (EERD…DRQR) and 1028 to 1040 (EGYR…HSSS).

The protein resides in the cytoplasm. Involved in regulation of nuclear migration. May be involved in regulating nuclear positioning. The sequence is that of Anucleate primary sterigmata protein B (apsB) from Emericella nidulans (strain FGSC A4 / ATCC 38163 / CBS 112.46 / NRRL 194 / M139) (Aspergillus nidulans).